The following is a 4450-amino-acid chain: Gramicidin S synthase 2 (4450 aa).

A domain 1 (proline-activating) region spans residues 467 to 1044 (DKTIHQLFTE…IQEISNYING (578 aa)). 4 consecutive Carrier domains span residues 971 to 1046 (VPTN…NGAK), 2006 to 2081 (APSS…ADGE), 3051 to 3126 (APRT…EETD), and 4089 to 4164 (APRN…THQE). O-(pantetheine 4'-phosphoryl)serine is present on residues Ser1006, Ser2041, Ser3086, and Ser4124. The domain 2 (valine-activating) stretch occupies residues 1521 to 2080 (DHVAVGWKDQ…SALAQYIADG (560 aa)). The domain 3 (ornithine-activating) stretch occupies residues 2538-3134 (YATNKIFHEL…TDTEQYMAIQ (597 aa)). The segment at 3590-4172 (IQELFEEQVK…QESENNVHQP (583 aa)) is domain 4 (leucine-activating).

The protein belongs to the ATP-dependent AMP-binding enzyme family. Large multienzyme complex of GrsA and GrsB. The cofactor is pantetheine 4'-phosphate.

Its pathway is antibiotic biosynthesis; gramicidin S biosynthesis. In terms of biological role, this protein is a multifunctional enzyme, able to activate and polymerize the amino acids Pro, Val, Orn and Leu. Activation sites for these AA consist of individual domains. The protein is Gramicidin S synthase 2 (grsB) of Brevibacillus brevis (Bacillus brevis).